A 423-amino-acid polypeptide reads, in one-letter code: Transcription factor AP-2-epsilon (423 aa).

The tract at residues 1–108 (MLVHSYSSME…EDAGLLSQPH (108 aa)) is disordered. Residues 14 to 27 (GLSSSSPGGRLSQL) show a composition bias toward low complexity. Residues 50–55 (YFPPPY) carry the PPxY motif motif. The segment covering 57-70 (QSSLSYSQSQDGGY) has biased composition (low complexity). A compositionally biased stretch (polar residues) spans 79 to 93 (SLNSLHQHQQAAWHS). An H-S-H (helix-span-helix), dimerization region spans residues 276 to 405 (RRKAANVTLL…YLLEALKLLD (130 aa)).

The protein belongs to the AP-2 family. As to quaternary structure, binds DNA as a dimer. Can form homodimers or heterodimers with other AP-2 family members.

It is found in the nucleus. Functionally, sequence-specific DNA-binding protein that interacts with inducible viral and cellular enhancer elements to regulate transcription of selected genes. AP-2 factors bind to the consensus sequence 5'-GCCNNNGGC-3' and activate genes involved in a large spectrum of important biological functions. The polypeptide is Transcription factor AP-2-epsilon (Danio rerio (Zebrafish)).